Here is a 459-residue protein sequence, read N- to C-terminus: MFS-type transporter SLC18B1 (459 aa).

Residue Met-1 is modified to N-acetylmethionine. Residues 1–10 (MDEAGSPAPA) are compositionally biased toward low complexity. The disordered stretch occupies residues 1–27 (MDEAGSPAPAGTGGGDDPGGSTRETSR). Topologically, residues 1 to 33 (MDEAGSPAPAGTGGGDDPGGSTRETSRRLSREQ) are cytoplasmic. Residue Ser-21 is modified to Phosphoserine. A helical transmembrane segment spans residues 34 to 54 (IFVLVSAASMNLGCMMTYSIL). At 55–70 (GPFFPKEAEKKGASNT) the chain is on the extracellular side. Residues 71–91 (MIGMIFGCYALFELLASLVFG) traverse the membrane as a helical segment. Residues 92–100 (KYLVHIGAK) lie on the Cytoplasmic side of the membrane. Residues 101-121 (FMFIAGMFVSGGVTILFGVLD) traverse the membrane as a helical segment. The Extracellular segment spans residues 122–127 (QLPEGP). Residues 128-148 (IFIAMCFLVRIVDAIGFGAAI) traverse the membrane as a helical segment. The Cytoplasmic segment spans residues 149-167 (TASSSILAKAFPNNVATVM). The helical transmembrane segment at 168–188 (GSLEVFSGLGLVAGPPLGGLL) threads the bilayer. Topologically, residues 189 to 195 (YQSFGYE) are extracellular. The chain crosses the membrane as a helical span at residues 196-216 (VPFIFLGCIVLLMIPLNLYIL). The Cytoplasmic segment spans residues 217-235 (PSYAQESDPGKQSFWKLVT). Residues 236–256 (LPKMGLLAFVIISLSSCFGFL) form a helical membrane-spanning segment. The Extracellular portion of the chain corresponds to 257–274 (DPTLSLFVMEKFSLSTGY). The chain crosses the membrane as a helical span at residues 275–295 (VGLVFLGLSLSYAISSPLFGL). Topologically, residues 296–306 (LSDKMPTLRKW) are cytoplasmic. The helical transmembrane segment at 307–327 (LLVFGNLITAGCYMLLGPVPL) threads the bilayer. Residues 328–333 (LHIKSQ) are Extracellular-facing. A helical membrane pass occupies residues 334–354 (LWLLVLVLVVNGISAGMSIIP). Topologically, residues 355 to 379 (TFPEMLSCAYANGFEDSISTLGLVS) are cytoplasmic. Residues 380–400 (GLFGAMWSVGAFMGPILGGFL) form a helical membrane-spanning segment. At 401-409 (CEKIGFEWA) the chain is on the extracellular side. Residues 410-430 (AAMQGLWTLLSGVSMALFYLW) traverse the membrane as a helical segment. The Cytoplasmic segment spans residues 431 to 459 (EDSTARRRSKAQNSLGTEEERAALLPNDT). The interval 440–459 (KAQNSLGTEEERAALLPNDT) is disordered.

This sequence belongs to the major facilitator superfamily. Widely expressed, with highest expression in the lung, pancreas and kidney. High expression in the CNS, particularly in the hypothalamus, the thalamus and the cerebellum. In the forebrain, abundantly expressed in the telencephalon, especially in the cerebral cortex layers, except layer 1, as well as in the induseum griseum, the piriform area, the taenia tecta, dorsal part and in the entorhinal area, lateral part. Lower levels in the bed anterior olfactory nucleus, posteroventral part and in layer two of the olfactory tubercle. In the amygdala, high levels observed in the intercalated nucleus and the medial nucleus. In the diencephalon, expressed in the nuclei in both the hypothalamus and thalamus. Among the hypothalamic areas, strongest expression in the arcuate nucleus and in the ventromedial nucleus, as well as in the suprachiasmatic nucleus, anterior nucleus, especially in its central part, and in the magnocellular division of the paraventricular nucleus. In the thalamus, highest levels in the medial habenula. Expression also observed in the paraventricular thalamic nucleus, parataenial nucleus, central medial nucleus, intermediodorsal nucleus and lateral dorsal nucleus. In the hindbrain, detected in the cerebellum and in the pons. In the midbrain and the medulla, expression levels were modest. In the midbrain, highest expression in the periaqueductal gray and all subdivisions of the interpeduncular nucleus, except for the caudal part. In the pons, the strongest labeling was seen in the nucleus incertus and in the tegmental nucleus. Expressed in bone marrow-derived mast cells (at protein level).

It is found in the cytoplasmic vesicle. The protein resides in the secretory vesicle membrane. The protein localises to the secretory vesicle. It localises to the synaptic vesicle membrane. The enzyme catalyses spermine(in) + n H(+)(out) = spermine(out) + n H(+)(in). It catalyses the reaction spermidine(in) + n H(+)(out) = spermidine(out) + n H(+)(in). It carries out the reaction serotonin(in) + n H(+)(out) = serotonin(out) + n H(+)(in). Functionally, proton-coupled polyamine antiporter involved in the translocation of polyamines from cytosol into secretory vesicles prior to their release via exocytosis. Uses the electrochemical proton gradient generated by a V-type proton-pumping ATPase to couple the efflux of protons with the uptake of a polyamine molecule. Facilitates vesicular storage of spermine and spermidine in astrocytes with an impact on glutamatergic neuronal transmission and memory formation. Upon antigen stimulation, regulates polyamine accumulation and release in mast cell secretory granules, which in turn potentiates mast cell degranulation and histamine secretion. The protein is MFS-type transporter SLC18B1 of Mus musculus (Mouse).